Consider the following 215-residue polypeptide: MRVILLGAPGAGKGTQARFITERFGIPQISTGDMLRAAVKAGSPLGLKVKGVMDSGGLVSDDIIIDLIRERIAQPDCARGFLFDGFPRTIPQAEALRDAGVSIDHVLEIAVDDEEIVSRMAGRRVHAASGRVYHDLHNPPKVAGKDDETGEDLIQREDDKEETVRHRLALYHSQTKPLVDFYQRLAATTGTPRYTRVEGIGSVSEITARVQAALA.

ATP is bound at residue 10 to 15 (GAGKGT). The interval 30-59 (STGDMLRAAVKAGSPLGLKVKGVMDSGGLV) is NMP. AMP is bound by residues Thr31, Arg36, 57–59 (GLV), 85–88 (GFPR), and Gln92. Positions 122-159 (GRRVHAASGRVYHDLHNPPKVAGKDDETGEDLIQREDD) are LID. ATP-binding positions include Arg123 and 132–133 (VY). 2 residues coordinate AMP: Arg156 and Arg167. An ATP-binding site is contributed by Gly201.

Belongs to the adenylate kinase family. In terms of assembly, monomer.

It localises to the cytoplasm. The catalysed reaction is AMP + ATP = 2 ADP. Its pathway is purine metabolism; AMP biosynthesis via salvage pathway; AMP from ADP: step 1/1. Its function is as follows. Catalyzes the reversible transfer of the terminal phosphate group between ATP and AMP. Plays an important role in cellular energy homeostasis and in adenine nucleotide metabolism. The chain is Adenylate kinase from Azotobacter vinelandii (strain DJ / ATCC BAA-1303).